Here is a 653-residue protein sequence, read N- to C-terminus: Fusexin 1 (653 aa).

Positions 1–24 (MKRVGNCWKASVAAFFLLMFTAFA) are cleaved as a signal peptide. Residues 25-559 (AADTTSVDTV…FENIWSGDAN (535 aa)) lie on the Extracellular side of the membrane. 4 disulfide bridges follow: cysteine 129–cysteine 167, cysteine 398–cysteine 441, cysteine 468–cysteine 487, and cysteine 499–cysteine 516. Residues 155–160 (DYWTGS) form a fusion loop region. A helical transmembrane segment spans residues 560–580 (ALNWLQVFVTFIAFLGGFALV). At 581–604 (GVKLGKIVDGLATEFIPVKDSHVR) the chain is on the cytoplasmic side. Helical transmembrane passes span 605 to 625 (LVIG…LVTD) and 626 to 646 (PLGL…YLSA). Residues 647–653 (SAPEINL) are Cytoplasmic-facing.

It belongs to the HAP2/GCS1 family. Fusexin 1 subfamily. In terms of assembly, homotrimer stabilized by interdomain contacts and numerous Ca(2+) and Na(+) ions.

It is found in the cell surface. Its subcellular location is the cell membrane. Its function is as follows. Exhibits fusogenic activity. Mediates cell-cell fusion in mammalian cells (bilateral fusion). This is Fusexin 1 from Haloplanus natans (strain DSM 17983 / JCM 14081 / CGMCC 1.8972 / RE-101).